A 1301-amino-acid polypeptide reads, in one-letter code: MADATSTPSIDFSKIQSVIEAPDLLKVQLDSFHNFIQDSVPLAKRREQGLEKVLRSAFPITDTRGLYLLEYISYSFDKPKYTVEDCIERGLTYDVSLKVKLKLSYKDEADETDWKETIQQEVYLGRIPYMTERGTFIVNGAERVVVAQLHRSPGVVFSEAVHPNGKKMYSAKIVPTRGSWIEFQTDINNQIFVYIDQKKNFLVTALLRAIGFTRDEDILGLFDLVEEVPMKAAKRERLVGQYLASDIVDMQTGEVVSARTAITEEVFEQIQAAGYKSVKIMKSFNGSDKGQDKSIVINTILNDSSATEEEALEIVYEELRANEAPDIDAARSFLERTFFNQKKYDLGEVGRYRIGKKLSREFSEMDEYLGGKGELKQLSDTIHQKILQTIQSFSDEPIGEEVLVLTHLDIIAVINYLIKLVNGQAEVDDVDHLANRRVRSVGEQLAAQFVIGLARMGKNVREKLNSRDSDKIAPADLINARTVSSVVSSFFATSQLSQFMDQTNPLAEMTNKRRVSALGPGGLTRERAGFEVRDVHYTHYGRLCPIETPEGPNIGLISSLSVYAEINDKGFIQTPYRVVEKGHVTDTVVMLSAEDEENKITVPVSIPIDANNNIAVESVQARTKGDYPLVPSEDVNYMDVSPVQIVSAAAALIPFLEHDDGNRALMGANMQRQAVPLLVSEAPVVGTGMEAKVARDSRSVILGEGPGFVEEVTSEFIKVRYDIDTENNEHMSLLDPDEGLKTYRMIKFKRSNQDTCISQRPIVKNGQKVDKGTVLADSSSTEDGELALGKNVLVAFMPWRGYNFEDAIILSERLVYDDVFTSIHVHEFEANVRDTKRGEEQFTRDIYNVSDEALRNLDENGIVRIGAEVKERDILVGKITPKGESDPTPEEKLLRAIFGDKSSDVKDASMHVPAGMKGIVIKTKLFSRKKKVGMDVKEKLELIDARFERREIELRKSFEKWLRQMLQGKKVKGLTSDKGKVLADEGAAFDDALLAKFSSQPFLESIDFTLGVTGTKKVDEAVIRLVKEFRFKLKDLADERDNEKYKVNVGDELPPGIEELAKVYIAQKRKIQVGDKMAGRHGNKGVVGKILPIEDMPFMADGTPVDIVLNPLGVPSRMNIGQLYETSLGWAAKKLGVKFKTPIFNGATYEEVQAELERAGLPMHGKVRLYDGRTGEQFDDEVTVGYIYMLKLSHLVDDKIHARSTGPYSLITQQPLGGKAQFGGQRFGEMEVWALEAYGAANILREMLTVKSDDVVGRNKTYEAIVKGQNLPEPGIPESFNVLIRELQGLGLEIRIDDRVP.

Belongs to the RNA polymerase beta chain family. In terms of assembly, the RNAP catalytic core consists of 2 alpha, 1 beta, 1 beta' and 1 omega subunit. When a sigma factor is associated with the core the holoenzyme is formed, which can initiate transcription.

It carries out the reaction RNA(n) + a ribonucleoside 5'-triphosphate = RNA(n+1) + diphosphate. Its function is as follows. DNA-dependent RNA polymerase catalyzes the transcription of DNA into RNA using the four ribonucleoside triphosphates as substrates. The polypeptide is DNA-directed RNA polymerase subunit beta (Chlorobium luteolum (strain DSM 273 / BCRC 81028 / 2530) (Pelodictyon luteolum)).